The sequence spans 220 residues: Nucleolar protein 12 (220 aa).

A coiled-coil region spans residues 31-86 (HKRKMQRRKTAVEEIKRKIKEEQKKMKEERHKEYMKMLKEREEALCELEENDELEE). The disordered stretch occupies residues 109–220 (ISDLDLSGIR…QTGKTRRRRN (112 aa)). The span at 139-148 (EKGADEEKPK) shows a compositional bias: basic and acidic residues. Basic residues-rich tracts occupy residues 176–186 (RSQRKSGKRPS) and 205–220 (KTQR…RRRN).

This sequence belongs to the RRP17 family.

It is found in the nucleus. The protein localises to the nucleolus. Its function is as follows. May bind to rRNA. The protein is Nucleolar protein 12 (nol12) of Xenopus laevis (African clawed frog).